A 25-amino-acid chain; its full sequence is Caerin-1.18 (25 aa).

Position 25 is a leucine amide (leucine 25).

Expressed by the skin dorsal glands.

The protein resides in the secreted. Shows significant activity against Gram-positive organisms, but is less effective against Gram-negative organisms. This Ranoidea gracilenta (Dainty green tree frog) protein is Caerin-1.18.